We begin with the raw amino-acid sequence, 645 residues long: MESPAFSKPLKDKINPWGPLIIMGILVRAGASVQRDSPHQVFNVTWKITNLMTGQTANATSLLGTMTDTFPKLYFDLCDLVGDNWDDPEPDIGDGCRSPGGRKRTRLYDFYVCPGHTVLTGCGGPREGYCGKWGCETTGQAYWKPSSSWDLISLKRGNTPKGQGPCFDSSVGSGSIQGATPGGRCNPLVLEFTDAGKRASWDAPKTWGLRLYRSTGADPVTLFSLTRQVLNVGPRVPIGPNPVITEQLPPSQPVQIMLPRPPRPPPSGAASMVPGAPPPSQQPGTGDRLLNLVEGAYQALNLTSPDKTQECWLCLVSGPPYYEGVAVLGTYSNHTSAPANCSVTSQHKLTLSEVTGQGLCIGAVPKTHQALCNTTQKTSDGSYYLASPAGTIWACSTGLTPCLSTTVLNLTTDYCVLVELWPKVTYHSPNYVYGQFGKKTKYKREPVSLTLALLLGGLTMGGIAAGVGTGTTALVATKQFEQLQAAIHTDLGALEKSVSALEKSLTSLSEVVLQNRRGLDLLFLKEGGLCAALKKECCFYADHTGVVRDSMAKLRERLNQRQKLFESGQGWFEGLFNRSPWFTTLISTIMGPLIVLLLILLFGPCILNRLVQFVKDRISVVQALVLTQQYHQLKSIDPEEVESRE.

Residues 1–33 (MESPAFSKPLKDKINPWGPLIIMGILVRAGASV) form the signal peptide. Positions 32-237 (SVQRDSPHQV…QVLNVGPRVP (206 aa)) are receptor-binding domain (RBD). Topologically, residues 34-585 (QRDSPHQVFN…FNRSPWFTTL (552 aa)) are extracellular. Residues Asn-43 and Asn-58 are each glycosylated (N-linked (GlcNAc...) asparagine; by host). 2 cysteine pairs are disulfide-bonded: Cys-113–Cys-130 and Cys-122–Cys-135. The interval 259-286 (PRPPRPPPSGAASMVPGAPPPSQQPGTG) is disordered. An N-linked (GlcNAc...) asparagine; by host glycan is attached at Asn-301. 6 cysteine pairs are disulfide-bonded: Cys-311–Cys-314, Cys-311–Cys-538, Cys-341–Cys-395, Cys-360–Cys-372, Cys-402–Cys-415, and Cys-530–Cys-537. The short motif at 311-314 (CWLC) is the CXXC element. N-linked (GlcNAc...) asparagine; by host glycans are attached at residues Asn-333 and Asn-340. N-linked (GlcNAc...) asparagine; by host glycans are attached at residues Asn-373 and Asn-409. The segment at 447-467 (VSLTLALLLGGLTMGGIAAGV) is fusion peptide. The stretch at 490-510 (DLGALEKSVSALEKSLTSLSE) forms a coiled coil. Positions 513 to 529 (LQNRRGLDLLFLKEGGL) are immunosuppression. Positions 530–538 (CAALKKECC) match the CX6CC motif. A helical transmembrane segment spans residues 586-606 (ISTIMGPLIVLLLILLFGPCI). Cys-605 carries S-palmitoyl cysteine; by host lipidation. Topologically, residues 607 to 640 (LNRLVQFVKDRISVVQALVLTQQYHQLKSIDPEE) are cytoplasmic. Positions 630-633 (YHQL) match the YXXL motif; contains endocytosis signal motif.

The mature envelope protein (Env) consists of a trimer of SU-TM heterodimers attached by a labile interchain disulfide bond. The activated Env consists of SU monomers and TM trimers. Specific enzymatic cleavages in vivo yield mature proteins. Envelope glycoproteins are synthesized as an inactive precursor that is N-glycosylated and processed likely by host cell furin or by a furin-like protease in the Golgi to yield the mature SU and TM proteins. The cleavage site between SU and TM requires the minimal sequence [KR]-X-[KR]-R. The R-peptide is released from the C-terminus of the cytoplasmic tail of the TM protein upon particle formation as a result of proteolytic cleavage by the viral protease. Cleavage of this peptide is required for TM to become fusogenic. In terms of processing, the CXXC motif is highly conserved across a broad range of retroviral envelope proteins. It is thought to participate in the formation of a labile disulfide bond possibly with the CX6CC motif present in the transmembrane protein. Isomerization of the intersubunit disulfide bond to an SU intrachain disulfide bond is thought to occur upon receptor recognition in order to allow membrane fusion. Post-translationally, the transmembrane protein is palmitoylated. The R-peptide is palmitoylated.

It is found in the virion membrane. The protein resides in the host cell membrane. The surface protein (SU) attaches the virus to the host cell by binding to its receptor. This interaction activates a thiol in a CXXC motif of the C-terminal domain, where the other Cys residue participates in the formation of the intersubunit disulfide. The activated thiol will attack the disulfide and cause its isomerization into a disulfide isomer within the motif. This leads to SU displacement and TM refolding, and is thought to activate its fusogenic potential by unmasking its fusion peptide. Fusion occurs at the host cell plasma membrane. In terms of biological role, the transmembrane protein (TM) acts as a class I viral fusion protein. Under the current model, the protein has at least 3 conformational states: pre-fusion native state, pre-hairpin intermediate state, and post-fusion hairpin state. During viral and target cell membrane fusion, the coiled coil regions (heptad repeats) assume a trimer-of-hairpins structure, positioning the fusion peptide in close proximity to the C-terminal region of the ectodomain. The formation of this structure appears to drive apposition and subsequent fusion of viral and target cell membranes. Membranes fusion leads to delivery of the nucleocapsid into the cytoplasm. This chain is Envelope glycoprotein (env), found in Xenotropic MuLV-related virus (isolate VP35) (XMRV).